The chain runs to 124 residues: Small ribosomal subunit protein uS12 (124 aa).

Residues 1-32 (MPTINQLVRKGRRDKTAKVKTAALKGSPQRRG) form a disordered region. Asp-89 is modified (3-methylthioaspartic acid). Residues 104 to 124 (TQGVKGRKQARSRYGAKKEKS) form a disordered region. A compositionally biased stretch (basic residues) spans 108 to 118 (KGRKQARSRYG).

It belongs to the universal ribosomal protein uS12 family. Part of the 30S ribosomal subunit. Contacts proteins S8 and S17. May interact with IF1 in the 30S initiation complex.

Functionally, with S4 and S5 plays an important role in translational accuracy. Interacts with and stabilizes bases of the 16S rRNA that are involved in tRNA selection in the A site and with the mRNA backbone. Located at the interface of the 30S and 50S subunits, it traverses the body of the 30S subunit contacting proteins on the other side and probably holding the rRNA structure together. The combined cluster of proteins S8, S12 and S17 appears to hold together the shoulder and platform of the 30S subunit. This is Small ribosomal subunit protein uS12 from Rhodococcus erythropolis (strain PR4 / NBRC 100887).